Reading from the N-terminus, the 263-residue chain is Ycf3-interacting protein 1, chloroplastic (263 aa).

Residues 1-71 (MASNMLQLSL…VNKEEDSATY (71 aa)) constitute a chloroplast transit peptide. A helical membrane pass occupies residues 238-258 (ALYLVSAFPIIIGISVVLILF).

The protein belongs to the Y3IP1/CEST family. In terms of assembly, interacts with Ycf3.

It is found in the plastid. The protein resides in the chloroplast thylakoid membrane. Its function is as follows. Nuclear genome-encoded factor that participates in photosystem I (PSI) biogenesis. Cooperates with the plastid genome-encoded protein PSI assembly Ycf3 in the assembly of stable PSI units in the thylakoid membrane. This chain is Ycf3-interacting protein 1, chloroplastic, found in Nicotiana tabacum (Common tobacco).